Reading from the N-terminus, the 141-residue chain is Decarboxylase CPUR_05434 (141 aa).

Residues 26–121 (EGMSEEAYRN…MHDHEMFADT (96 aa)) form the EthD domain.

It belongs to the tpcK family.

The enzyme catalyses atrochrysone carboxylate + H(+) = atrochrysone + CO2. Functionally, decarboxylase; part of the ergochrome gene cluster responsible for the typical purple-black color of the ergot sclerotia. The ergochrome gene cluster produces several ergot pigments including the yellow ergochrome secalonic acid and its derivatives, as well as the red anthraquinones endocrocin and clavorubin. The pathway begins with the synthesis of atrochrysone thioester by the polyketide synthase (PKS) CPUR_05437. The atrochrysone carboxyl ACP thioesterase CPUR_05436 then breaks the thioester bond and releases the atrochrysone carboxylic acid from CPUR_05437. The decarboxylase CPUR_05434 then catalyzes the concerted decarboxylation-elimination required to convert atochrysone carboxylic acid into emodin anthrone, which is further oxidized to emodin by the anthrone oxygenase CPUR_05435. Emodin is further modified to yield monodictyphenone via several steps involving CPUR_05427, CPUR_05428, CPUR_05429 and CPUR_05430. The short chain dehydrogenase/reductase CPUR_05418 then catalyzes the C-5 ketoreduction to give the xanthone skeleton of the monomeric units. Ergochromes formation requires further dimerization steps of different xanthone units, probably catalyzed by the cytochrome P450 monooxygenase CPUR_05419. CPUR_05425, CPUR_05426 and CPUR_05431 are unique to Claviceps, thus it is likely that they are involved in further modification of xanthone units or in their dimerization. The yellow ergochromes and the red anthraquinone pigments endocrocin and clavorubin are products from the same PKS derived precursors and the latter are likely shunt products in the pathway of xanthone biosynthesis. It is proposed that atrochrysone carboxylic acid released from the PKS CPUR_05437 can also be converted to endocrocin anthrone which is further oxidized into endocrocin by CPUR_05435. Endocrocin could be then modified to clavorubin, possibly by CPUR_05423 and CPUR_05431. Clavorubin is the principal anthraquinone metabolite produced by the cluster with a much higher yield compared to endocrocin. The chain is Decarboxylase CPUR_05434 from Claviceps purpurea (strain 20.1) (Ergot fungus).